The sequence spans 579 residues: Thiol:disulfide interchange protein DsbD (579 aa).

Residues 1–16 form the signal peptide; it reads MKKLFLFFTLIFTAFA. Cystine bridges form between Cys124–Cys129 and Cys193–Cys315. 8 helical membrane passes run 178–198, 230–250, 254–274, 296–316, 337–357, 376–396, 397–417, and 420–440; these read IFGF…LPML, LTYT…QIAL, YVMI…FGLF, GAFG…SPCT, AATL…ITLF, FGFV…PEVW, EPRL…LQMS, and GFGY…VQPL. One can recognise a Thioredoxin domain in the interval 449–579; it reads TTTQSAVENM…AFSNWLKALH (131 aa). Cysteines 495 and 498 form a disulfide.

The protein belongs to the thioredoxin family. DsbD subfamily.

The protein resides in the cell inner membrane. The catalysed reaction is [protein]-dithiol + NAD(+) = [protein]-disulfide + NADH + H(+). The enzyme catalyses [protein]-dithiol + NADP(+) = [protein]-disulfide + NADPH + H(+). Functionally, required to facilitate the formation of correct disulfide bonds in some periplasmic proteins and for the assembly of the periplasmic c-type cytochromes. Acts by transferring electrons from cytoplasmic thioredoxin to the periplasm. This transfer involves a cascade of disulfide bond formation and reduction steps. This Haemophilus influenzae (strain 86-028NP) protein is Thiol:disulfide interchange protein DsbD.